Here is a 238-residue protein sequence, read N- to C-terminus: NADH-quinone oxidoreductase subunit C (238 aa).

Residues methionine 1–glutamate 20 are disordered.

This sequence belongs to the complex I 30 kDa subunit family. In terms of assembly, NDH-1 is composed of 14 different subunits. Subunits NuoB, C, D, E, F, and G constitute the peripheral sector of the complex.

It is found in the cell membrane. It carries out the reaction a quinone + NADH + 5 H(+)(in) = a quinol + NAD(+) + 4 H(+)(out). In terms of biological role, NDH-1 shuttles electrons from NADH, via FMN and iron-sulfur (Fe-S) centers, to quinones in the respiratory chain. The immediate electron acceptor for the enzyme in this species is believed to be a menaquinone. Couples the redox reaction to proton translocation (for every two electrons transferred, four hydrogen ions are translocated across the cytoplasmic membrane), and thus conserves the redox energy in a proton gradient. In Mycobacterium ulcerans (strain Agy99), this protein is NADH-quinone oxidoreductase subunit C.